The chain runs to 857 residues: MSNSSARPESLGEYLAHLPLSDEQRAELASCTSFSELHQRLAGNATATTTEAVQASVGPRLTVGSAAELEDAEMLGVDGSGRLCLKIAPPIKRTRVVPEPWRTNVLIRMWRRMTGRTNAPQPPKRELPPARWRTVGSIRRYILLTLMIGQTLVAGWYMKGILPYQGWSFVDLDEVVNQPLWDTVVQVWPYALQTSILILFGILFCWVSAGFWTALMGFLELLTGRDKYRISGSSAGSEPIAPEARTALVMPICNEDVPRVFAGLRATFESVAASGNLDRFDFFVLSDTNDTDIAVAEQQAWLDVCRETKGFGRIFYRRRRRRVKRKSGNLDDFCRRWGGEYKYMVVLDADSVMSGECLSSLVRLMEANPDAGIIQTAPKASGMDTLYARMQQFATRVYGPLFTAGLHFWQLGESHYWGHNAIIRMKPFIEHCALAPLPGKGAFAGAILSHDFVEAALMRRAGWGVWIAYDLPGSYEELPPNLLDELKRDRRWCHGNLMNFRLFLVKGMHPVHRAVFLTGVMSYLSAPLWFFFLVLSTALLATNTLMEPQYFIEPYQLYPLWPQWHPEKAVALFSTTIVLLFLPKLLSIILIWAKGAVEFGGRIKVTLSMLMEMLFSMLLAPVRMIFHTRFVLAAFLGWAATWNSPQRDDDSTPWSEAVRRHGPQTLLGIAWAALVAWLNPSFLWWLAPIVGSLVLSIPVSVISSRTRLGLAAKDEKLFLIPEEYATPQELLATDQYTHENRWHALHDGFVRAVVDPRQNALACAMATARHGQAAPIEAMRAERLAKAIEVGPKGLDLGTRLALLSDPVALARLHAQVWAEHNAAWIDVWRASINNDPHSPLLPLHPANEAQPSLVGA.

The next 6 membrane-spanning stretches (helical) occupy residues 142 to 162 (ILLT…KGIL), 196 to 216 (ILIL…TALM), 515 to 535 (VFLT…FLVL), 572 to 592 (LFST…ILIW), 606 to 626 (TLSM…RMIF), and 682 to 702 (FLWW…VSVI).

This sequence belongs to the glycosyltransferase 2 family. OpgH subfamily.

The protein resides in the cell inner membrane. It functions in the pathway glycan metabolism; osmoregulated periplasmic glucan (OPG) biosynthesis. Involved in the biosynthesis of osmoregulated periplasmic glucans (OPGs). The protein is Glucans biosynthesis glucosyltransferase H of Pseudomonas putida (strain W619).